The chain runs to 211 residues: SAGA-associated factor 11 homolog 1 (211 aa).

The SGF11-type zinc finger occupies 115-136 (CTCPNCDRLVAAARFAPHLEKC). Residues 149-211 (RRLATKEGSS…GSKKNNGKTF (63 aa)) form a disordered region. Over residues 157–166 (SSASTSSTST) the composition is skewed to low complexity. Ser-187 is modified (phosphoserine). Over residues 197–211 (SSRNNGSKKNNGKTF) the composition is skewed to low complexity.

It belongs to the SGF11 family. As to quaternary structure, component of some SAGA transcription coactivator-HAT complexes, at least composed of Ada2b, not/nonstop, Pcaf/Gcn5, Sgf11 and Spt3. Within the SAGA complex, Sgf11, e(y)2, and not/nonstop form an additional subcomplex of SAGA called the DUB module (deubiquitination module). Interacts directly with not/nonstop. Interacts with the AMEX complex component xmas-2. Interacts with Cbp80; important for promoter recruitment of Sgf11 that is not associated with the DUB module.

Its subcellular location is the nucleus. It is found in the nucleoplasm. The protein resides in the cytoplasm. Component of the transcription regulatory histone acetylation (HAT) complex SAGA, a multiprotein complex that activates transcription by remodeling chromatin and mediating histone acetylation and deubiquitination. Within the SAGA complex, participates in a subcomplex that specifically deubiquitinates histone H2B. The SAGA complex is recruited to specific gene promoters by activators, where it is required for transcription. Required for nuclear receptor-mediated transactivation. Binds independently on SAGA to promoters in an RNA-dependent manner. Binds to mRNA and is essential for total mRNA export from the nucleus. Required to counteract heterochromatin silencing. Controls the development of neuronal connectivity in visual system by being required for accurate axon targeting in the optic lobe. Required for expression of ecdysone-induced genes such as br/broad. This chain is SAGA-associated factor 11 homolog 1, found in Drosophila grimshawi (Hawaiian fruit fly).